The primary structure comprises 89 residues: Putative regulatory protein MAE_11840 (89 aa).

The protein belongs to the RemA family.

The chain is Putative regulatory protein MAE_11840 from Microcystis aeruginosa (strain NIES-843 / IAM M-2473).